Here is a 581-residue protein sequence, read N- to C-terminus: UvrABC system protein C (581 aa).

Positions 15–94 (REPGVYLFEQ…IKRHRPPYNV (80 aa)) constitute a GIY-YIG domain. One can recognise a UVR domain in the interval 202 to 237 (GVLADPLRREMEAAAQNQEFERAANLRDKLGAVEAL).

Belongs to the UvrC family. Interacts with UvrB in an incision complex.

Its subcellular location is the cytoplasm. The UvrABC repair system catalyzes the recognition and processing of DNA lesions. UvrC both incises the 5' and 3' sides of the lesion. The N-terminal half is responsible for the 3' incision and the C-terminal half is responsible for the 5' incision. This is UvrABC system protein C from Haloarcula marismortui (strain ATCC 43049 / DSM 3752 / JCM 8966 / VKM B-1809) (Halobacterium marismortui).